The primary structure comprises 334 residues: Glyceraldehyde-3-phosphate dehydrogenase (334 aa).

Residues 11–12 (RI), Asp-33, and Ser-119 contribute to the NAD(+) site. D-glyceraldehyde 3-phosphate is bound by residues 149 to 151 (SCT) and Thr-180. Cys-150 acts as the Nucleophile in catalysis. NAD(+) is bound at residue Asn-181. D-glyceraldehyde 3-phosphate contacts are provided by residues Arg-197, 210–211 (TG), and Arg-233. Position 314 (Asn-314) interacts with NAD(+).

Belongs to the glyceraldehyde-3-phosphate dehydrogenase family. As to quaternary structure, homotetramer.

It localises to the cytoplasm. It carries out the reaction D-glyceraldehyde 3-phosphate + phosphate + NAD(+) = (2R)-3-phospho-glyceroyl phosphate + NADH + H(+). It functions in the pathway carbohydrate degradation; glycolysis; pyruvate from D-glyceraldehyde 3-phosphate: step 1/5. In terms of biological role, catalyzes the oxidative phosphorylation of glyceraldehyde 3-phosphate (G3P) to 1,3-bisphosphoglycerate (BPG) using the cofactor NAD. The first reaction step involves the formation of a hemiacetal intermediate between G3P and a cysteine residue, and this hemiacetal intermediate is then oxidized to a thioester, with concomitant reduction of NAD to NADH. The reduced NADH is then exchanged with the second NAD, and the thioester is attacked by a nucleophilic inorganic phosphate to produce BPG. This Clostridium pasteurianum protein is Glyceraldehyde-3-phosphate dehydrogenase (gap).